Consider the following 264-residue polypeptide: 3-methyl-2-oxobutanoate hydroxymethyltransferase (264 aa).

Mg(2+) contacts are provided by D45 and D84. Residues 45-46 (DS), D84, and K112 contribute to the 3-methyl-2-oxobutanoate site. Position 114 (E114) interacts with Mg(2+). E181 functions as the Proton acceptor in the catalytic mechanism.

This sequence belongs to the PanB family. Homodecamer; pentamer of dimers. Requires Mg(2+) as cofactor.

It localises to the cytoplasm. The enzyme catalyses 3-methyl-2-oxobutanoate + (6R)-5,10-methylene-5,6,7,8-tetrahydrofolate + H2O = 2-dehydropantoate + (6S)-5,6,7,8-tetrahydrofolate. Its pathway is cofactor biosynthesis; (R)-pantothenate biosynthesis; (R)-pantoate from 3-methyl-2-oxobutanoate: step 1/2. Functionally, catalyzes the reversible reaction in which hydroxymethyl group from 5,10-methylenetetrahydrofolate is transferred onto alpha-ketoisovalerate to form ketopantoate. This Shigella flexneri serotype 5b (strain 8401) protein is 3-methyl-2-oxobutanoate hydroxymethyltransferase.